The primary structure comprises 234 residues: Triosephosphate isomerase (234 aa).

Substrate is bound at residue Asn-8–Lys-10. His-90 acts as the Electrophile in catalysis. Residue Glu-159 is the Proton acceptor of the active site. 2 residues coordinate substrate: Gly-165 and Ser-197.

This sequence belongs to the triosephosphate isomerase family. Homodimer.

The protein localises to the cytoplasm. The catalysed reaction is D-glyceraldehyde 3-phosphate = dihydroxyacetone phosphate. It functions in the pathway carbohydrate biosynthesis; gluconeogenesis. It participates in carbohydrate degradation; glycolysis; D-glyceraldehyde 3-phosphate from glycerone phosphate: step 1/1. Functionally, involved in the gluconeogenesis. Catalyzes stereospecifically the conversion of dihydroxyacetone phosphate (DHAP) to D-glyceraldehyde-3-phosphate (G3P). This chain is Triosephosphate isomerase, found in Helicobacter pylori (strain G27).